Consider the following 501-residue polypeptide: Probable cytosol aminopeptidase (501 aa).

Mn(2+) contacts are provided by lysine 268 and aspartate 273. Lysine 280 is an active-site residue. The Mn(2+) site is built by aspartate 291, aspartate 350, and glutamate 352. Arginine 354 is a catalytic residue.

This sequence belongs to the peptidase M17 family. Mn(2+) is required as a cofactor.

The protein resides in the cytoplasm. It carries out the reaction Release of an N-terminal amino acid, Xaa-|-Yaa-, in which Xaa is preferably Leu, but may be other amino acids including Pro although not Arg or Lys, and Yaa may be Pro. Amino acid amides and methyl esters are also readily hydrolyzed, but rates on arylamides are exceedingly low.. The enzyme catalyses Release of an N-terminal amino acid, preferentially leucine, but not glutamic or aspartic acids.. Its function is as follows. Presumably involved in the processing and regular turnover of intracellular proteins. Catalyzes the removal of unsubstituted N-terminal amino acids from various peptides. The sequence is that of Probable cytosol aminopeptidase from Pseudoalteromonas atlantica (strain T6c / ATCC BAA-1087).